Consider the following 369-residue polypeptide: UPF0324 membrane protein DVU_0543 (369 aa).

9 helical membrane passes run 13–31 (IVPGLLVMVGTLYVLRTYV), 46–65 (WLVQVLSLNYILLSILTGMF), 110–132 (GGVAITLIVAFVFGTAIFIMWLG), 142–164 (TATMAAACGVCGVSAAVATAPGV), 171–193 (LALSIATILGFGIMTMFVSPFIG), 240–262 (WNVVRVICIPFVVFFITAWYWKG), 269–291 (TSLGSILASKFPIFVLGFVGMTA), 306–328 (LHLMRDVMAWIFGVGLVGLGAYI), and 341–363 (LRIGLIAGMVKYILALIIILAFI).

It belongs to the UPF0324 family.

It is found in the cell membrane. The polypeptide is UPF0324 membrane protein DVU_0543 (Nitratidesulfovibrio vulgaris (strain ATCC 29579 / DSM 644 / CCUG 34227 / NCIMB 8303 / VKM B-1760 / Hildenborough) (Desulfovibrio vulgaris)).